The primary structure comprises 320 residues: Beta-ketoacyl-[acyl-carrier-protein] synthase III (320 aa).

Residues Cys114 and His247 contribute to the active site. The tract at residues Gln248–Arg252 is ACP-binding. Asn277 is a catalytic residue.

It belongs to the thiolase-like superfamily. FabH family. In terms of assembly, homodimer.

It is found in the cytoplasm. The catalysed reaction is malonyl-[ACP] + acetyl-CoA + H(+) = 3-oxobutanoyl-[ACP] + CO2 + CoA. Its pathway is lipid metabolism; fatty acid biosynthesis. Its function is as follows. Catalyzes the condensation reaction of fatty acid synthesis by the addition to an acyl acceptor of two carbons from malonyl-ACP. Catalyzes the first condensation reaction which initiates fatty acid synthesis and may therefore play a role in governing the total rate of fatty acid production. Possesses both acetoacetyl-ACP synthase and acetyl transacylase activities. Its substrate specificity determines the biosynthesis of branched-chain and/or straight-chain of fatty acids. This Neisseria meningitidis serogroup A / serotype 4A (strain DSM 15465 / Z2491) protein is Beta-ketoacyl-[acyl-carrier-protein] synthase III.